Consider the following 256-residue polypeptide: MAAAVGRLLRASVARGVSAIPWGISATAALRPAACGRTSLTNLLCSGSSQAKLFSTSSSYHAPAVTQHAPYFKGTAVVNGEFKDLSLDDFKGKYLVLFFYPLDFTFVCPTEIVAFSDKANEFHDVNCEVVAVSVDSHFSHLAWINTPRKNGGLGHMNIALLSDLTKQISRDYGVLLEGSGLALRGLFIIDPNGVIKHLSVNDLPVGRSVEETLRLVKAFQYVETHGEVCPANWTPDSPTIKPNPAASKEYFQKVNQ.

The transit peptide at 1 to 61 directs the protein to the mitochondrion; that stretch reads MAAAVGRLLR…KLFSTSSSYH (61 aa). Positions 63 to 221 constitute a Thioredoxin domain; the sequence is PAVTQHAPYF…TLRLVKAFQY (159 aa). An N6-succinyllysine modification is found at K83. N6-acetyllysine; alternate is present on K91. The residue at position 91 (K91) is an N6-succinyllysine; alternate. C108 acts as the Cysteine sulfenic acid (-SOH) intermediate in catalysis. A Phosphothreonine modification is found at T146.

Belongs to the peroxiredoxin family. AhpC/Prx1 subfamily. As to quaternary structure, homodimer; disulfide-linked, upon oxidation. 6 homodimers assemble to form a ring-like dodecamer. Interacts with NEK6. Interacts with LRRK2. Interacts with MAP3K13. Interacts with RPS6KC1 (via PX domain). Phosphorylated by LRRK2; phosphorylation reduces perodixase activity. In terms of processing, the enzyme can be inactivated by further oxidation of the cysteine sulfenic acid (C(P)-SOH) to sulphinic acid (C(P)-SO2H) and sulphonic acid (C(P)-SO3H) instead of its condensation to a disulfide bond. Post-translationally, S-palmitoylated.

Its subcellular location is the mitochondrion. The protein localises to the cytoplasm. It is found in the early endosome. The catalysed reaction is a hydroperoxide + [thioredoxin]-dithiol = an alcohol + [thioredoxin]-disulfide + H2O. Its function is as follows. Thiol-specific peroxidase that catalyzes the reduction of hydrogen peroxide and organic hydroperoxides to water and alcohols, respectively. Plays a role in cell protection against oxidative stress by detoxifying peroxides. Acts synergistically with MAP3K13 to regulate the activation of NF-kappa-B in the cytosol. Required for the maintenance of physical strength. This Pongo abelii (Sumatran orangutan) protein is Thioredoxin-dependent peroxide reductase, mitochondrial (PRDX3).